Consider the following 301-residue polypeptide: Nucleotide-binding protein ELI_02120 (301 aa).

An ATP-binding site is contributed by 12–19; it reads GMSGAGKS. 62–65 contacts GTP; sequence DSRT.

This sequence belongs to the RapZ-like family.

Displays ATPase and GTPase activities. This chain is Nucleotide-binding protein ELI_02120, found in Erythrobacter litoralis (strain HTCC2594).